Reading from the N-terminus, the 429-residue chain is MSKKIQSVRGMNDYLPVETAVWQRVERIIKSVVESYGYSEIRTPILEQTPLFKRAIGEVTDVVEKEMYTFNDRERDAKEVVSLTLRPEGTAGCVRAGIEHGLLYNQEQRLWYMGPMFRHERPQKGRYRQFHQIGLEVFGLQGPDIDAELIMLTARWWRELGISEHVTLELNSIGSLEARANYRDALVAFLEQHKEKLDEDCKRRMYTNPLRVLDSKNPEVQALLNDAPALGDYLDEESREHFAGLCKLLESAGIAYTVNQRLVRGLDYYNRTVFEWVTNSLGSQGTVCAGGRYDGLVEQLGGRATSAVGFAMGLERLVLLVQAVNPEFKADPVVDIYLVASGADTQPAAMALAERLRDELPGVKLMTNHGGGNFKKQFGRADKWGARIAVVLGESEVANGTAVVKDLRSGEQTAVAQDSVAAHLRTLLG.

The protein belongs to the class-II aminoacyl-tRNA synthetase family. Homodimer.

The protein resides in the cytoplasm. The enzyme catalyses tRNA(His) + L-histidine + ATP = L-histidyl-tRNA(His) + AMP + diphosphate + H(+). This chain is Histidine--tRNA ligase, found in Escherichia fergusonii (strain ATCC 35469 / DSM 13698 / CCUG 18766 / IAM 14443 / JCM 21226 / LMG 7866 / NBRC 102419 / NCTC 12128 / CDC 0568-73).